The primary structure comprises 113 residues: uncharacterized protein (113 aa).

Residues 16–113 (TPFGYTLSLI…CEWGVKNQNN (98 aa)) enclose the HTH hxlR-type domain.

This is an uncharacterized protein from Halalkalibacterium halodurans (strain ATCC BAA-125 / DSM 18197 / FERM 7344 / JCM 9153 / C-125) (Bacillus halodurans).